Here is a 192-residue protein sequence, read N- to C-terminus: Small ribosomal subunit protein uS4B (192 aa).

Phosphoserine is present on residues S89 and S179. An S4 RNA-binding domain is found at 107 to 181; sequence RRLQTQVFKL…CKRKRLRSQQ (75 aa). Positions 166 to 192 are disordered; that stretch reads GGRPGRCKRKRLRSQQEGGEGEEAEEE.

The protein belongs to the universal ribosomal protein uS4 family. As to quaternary structure, component of the small ribosomal subunit (SSU). Mature yeast ribosomes consist of a small (40S) and a large (60S) subunit. The 40S small subunit contains 1 molecule of ribosomal RNA (18S rRNA) and at least 33 different proteins. The large 60S subunit contains 3 rRNA molecules (25S, 5.8S and 5S rRNA) and at least 46 different proteins. Interacts with snoRNA U3. uS11 interacts with MPP10. Component of the ribosomal small subunit (SSU) processome composed of at least 40 protein subunits and snoRNA U3.

The protein localises to the cytoplasm. Component of the ribosome, a large ribonucleoprotein complex responsible for the synthesis of proteins in the cell. The small ribosomal subunit (SSU) binds messenger RNAs (mRNAs) and translates the encoded message by selecting cognate aminoacyl-transfer RNA (tRNA) molecules. The large subunit (LSU) contains the ribosomal catalytic site termed the peptidyl transferase center (PTC), which catalyzes the formation of peptide bonds, thereby polymerizing the amino acids delivered by tRNAs into a polypeptide chain. The nascent polypeptides leave the ribosome through a tunnel in the LSU and interact with protein factors that function in enzymatic processing, targeting, and the membrane insertion of nascent chains at the exit of the ribosomal tunnel. uS4 is involved in nucleolar processing of pre-18S ribosomal RNA and ribosome assembly. The polypeptide is Small ribosomal subunit protein uS4B (rps902) (Schizosaccharomyces pombe (strain 972 / ATCC 24843) (Fission yeast)).